Reading from the N-terminus, the 448-residue chain is Dual specificity mitogen-activated protein kinase kinase 5 (448 aa).

Positions 18–25 (VIRIKIPN) are interaction with MAPK7. The region spanning 18–109 (VIRIKIPNSG…EPLQIFPRAC (92 aa)) is the PB1 domain. Residues 64–68 (DEDGD) form an interaction with MAP3K2/MAP3K3 region. The disordered stretch occupies residues 116–144 (NIHGLKVNTRAGPSQHTSPVVSDSLPSNS). Residues 117–131 (IHGLKVNTRAGPSQH) form an interaction with MAPK7 region. Polar residues predominate over residues 126 to 144 (AGPSQHTSPVVSDSLPSNS). Residues 166-419 (IRYRDTLGHG…PEELMGHPFI (254 aa)) form the Protein kinase domain. Residues 172 to 180 (LGHGNGGTV) and lysine 195 contribute to the ATP site. Aspartate 283 acts as the Proton acceptor in catalysis. Residue serine 311 is modified to Phosphoserine. At threonine 315 the chain carries Phosphothreonine.

This sequence belongs to the protein kinase superfamily. STE Ser/Thr protein kinase family. MAP kinase kinase subfamily. As to quaternary structure, interacts with PARD6A, MAP3K3 and MAPK7. Forms a complex with SQSTM1 and PRKCZ or PRKCI. Requires Mg(2+) as cofactor. In terms of processing, activated by phosphorylation on Ser/Thr by MAP kinase kinase kinases.

The protein localises to the cytoplasm. It carries out the reaction L-seryl-[protein] + ATP = O-phospho-L-seryl-[protein] + ADP + H(+). The enzyme catalyses L-threonyl-[protein] + ATP = O-phospho-L-threonyl-[protein] + ADP + H(+). The catalysed reaction is L-tyrosyl-[protein] + ATP = O-phospho-L-tyrosyl-[protein] + ADP + H(+). Acts as a scaffold for the formation of a ternary MAP3K2/MAP3K3-MAP3K5-MAPK7 signaling complex. Activation of this pathway appears to play a critical role in protecting cells from stress-induced apoptosis, neuronal survival and cardiac development and angiogenesis. As part of the MAPK/ERK signaling pathway, acts as a negative regulator of apoptosis in cardiomyocytes via promotion of STUB1/CHIP-mediated ubiquitination and degradation of ICER-type isoforms of CREM. This is Dual specificity mitogen-activated protein kinase kinase 5 (Map2k5) from Mus musculus (Mouse).